We begin with the raw amino-acid sequence, 739 residues long: Phosphoribosylformylglycinamidine synthase subunit PurL (739 aa).

The active site involves His-49. ATP contacts are provided by Tyr-52 and Lys-91. Glu-93 provides a ligand contact to Mg(2+). Substrate is bound by residues 94–97 and Arg-116; that span reads SHNH. The Proton acceptor role is filled by His-95. Asp-117 lines the Mg(2+) pocket. Gln-240 serves as a coordination point for substrate. Asp-268 contributes to the Mg(2+) binding site. 312–314 provides a ligand contact to substrate; that stretch reads ESQ. ATP-binding residues include Asp-493 and Gly-530. Asn-531 is a binding site for Mg(2+). Residue Ser-533 coordinates substrate.

The protein belongs to the FGAMS family. Monomer. Part of the FGAM synthase complex composed of 1 PurL, 1 PurQ and 2 PurS subunits.

The protein localises to the cytoplasm. The enzyme catalyses N(2)-formyl-N(1)-(5-phospho-beta-D-ribosyl)glycinamide + L-glutamine + ATP + H2O = 2-formamido-N(1)-(5-O-phospho-beta-D-ribosyl)acetamidine + L-glutamate + ADP + phosphate + H(+). The protein operates within purine metabolism; IMP biosynthesis via de novo pathway; 5-amino-1-(5-phospho-D-ribosyl)imidazole from N(2)-formyl-N(1)-(5-phospho-D-ribosyl)glycinamide: step 1/2. Functionally, part of the phosphoribosylformylglycinamidine synthase complex involved in the purines biosynthetic pathway. Catalyzes the ATP-dependent conversion of formylglycinamide ribonucleotide (FGAR) and glutamine to yield formylglycinamidine ribonucleotide (FGAM) and glutamate. The FGAM synthase complex is composed of three subunits. PurQ produces an ammonia molecule by converting glutamine to glutamate. PurL transfers the ammonia molecule to FGAR to form FGAM in an ATP-dependent manner. PurS interacts with PurQ and PurL and is thought to assist in the transfer of the ammonia molecule from PurQ to PurL. The protein is Phosphoribosylformylglycinamidine synthase subunit PurL of Parvibaculum lavamentivorans (strain DS-1 / DSM 13023 / NCIMB 13966).